Consider the following 398-residue polypeptide: Argininosuccinate lyase (398 aa).

It belongs to the lyase 1 family. Argininosuccinate lyase subfamily.

Its subcellular location is the cytoplasm. The enzyme catalyses 2-(N(omega)-L-arginino)succinate = fumarate + L-arginine. Its pathway is amino-acid biosynthesis; L-arginine biosynthesis; L-arginine from L-ornithine and carbamoyl phosphate: step 3/3. The polypeptide is Argininosuccinate lyase (Thermotoga neapolitana (strain ATCC 49049 / DSM 4359 / NBRC 107923 / NS-E)).